Here is a 321-residue protein sequence, read N- to C-terminus: ATP-dependent 6-phosphofructokinase (321 aa).

Position 12 (glycine 12) interacts with ATP. 22–26 contacts ADP; the sequence is RGVVR. Residues 73–74 and 103–106 contribute to the ATP site; these read RF and GDGS. Aspartate 104 is a Mg(2+) binding site. 127–129 lines the substrate pocket; the sequence is TID. Aspartate 129 acts as the Proton acceptor in catalysis. Arginine 156 serves as a coordination point for ADP. Residues arginine 164 and 171 to 173 each bind substrate; that span reads MGR. ADP-binding positions include 187 to 189, lysine 213, and 215 to 217; these read GCE and KRH. Substrate is bound by residues glutamate 224, arginine 245, and 251–254; that span reads HTQR.

The protein belongs to the phosphofructokinase type A (PFKA) family. ATP-dependent PFK group I subfamily. Prokaryotic clade 'B1' sub-subfamily. As to quaternary structure, homotetramer. It depends on Mg(2+) as a cofactor.

Its subcellular location is the cytoplasm. It catalyses the reaction beta-D-fructose 6-phosphate + ATP = beta-D-fructose 1,6-bisphosphate + ADP + H(+). The protein operates within carbohydrate degradation; glycolysis; D-glyceraldehyde 3-phosphate and glycerone phosphate from D-glucose: step 3/4. Its activity is regulated as follows. Allosterically activated by ADP and other diphosphonucleosides, and allosterically inhibited by phosphoenolpyruvate. Functionally, catalyzes the phosphorylation of D-fructose 6-phosphate to fructose 1,6-bisphosphate by ATP, the first committing step of glycolysis. The polypeptide is ATP-dependent 6-phosphofructokinase (Glaesserella parasuis serovar 5 (strain SH0165) (Haemophilus parasuis)).